A 334-amino-acid chain; its full sequence is UL-16 binding protein 5 (334 aa).

Residues Met-1–Thr-25 form the signal peptide. The Extracellular segment spans residues Gly-26–Arg-223. The MHC class I alpha-1 like stretch occupies residues Asp-29–Glu-117. An intrachain disulfide couples Cys-50 to Cys-66. A glycan (N-linked (GlcNAc...) asparagine) is linked at Asn-82. Positions Pro-118–Gly-210 are MHC class I alpha-2 like. A disulfide bridge links Cys-127 with Cys-190. Gly-218 carries the GPI-anchor amidated glycine lipid modification. A propeptide spans Thr-219–Ser-334 (removed in mature form). The chain crosses the membrane as a helical span at residues Ala-224 to Ser-243. The Cytoplasmic portion of the chain corresponds to Arg-244 to Ser-334.

This sequence belongs to the MHC class I family. Interacts with KLRK1/NKG2D. In terms of assembly, (Microbial infection) In CMV-infected cells, interacts with the viral glycoprotein UL16; this interaction causes RAET1G retention in the endoplasmic reticulum and cis-Golgi and prevents binding to and activation of KLRK1/NKG2D, providing CMV with an immune evasion mechanism. In terms of processing, the functional form is cleaved C-terminally of the GPI-anchor and yields a 28 kDa protein. Isoform 1 is highly expressed in colon and in a number of tumor cell lines and highly restricted in normal tissues. Both isoforms are frequently expressed in cell lines derived from epithelial cancers, and in primary breast cancers.

It is found in the cell membrane. The protein localises to the endoplasmic reticulum. It localises to the secreted. In terms of biological role, binds and activates the KLRK1/NKG2D receptor, mediating natural killer cell cytotoxicity. Down-regulates the expression of KLRK1 and stimulates natural killer cells to secrete IFNG. Functionally, stimulates natural killer cells to secrete IFNG. The chain is UL-16 binding protein 5 from Homo sapiens (Human).